Reading from the N-terminus, the 194-residue chain is Adenylate kinase (194 aa).

8 to 16 (GIPGVGKST) is an ATP binding site.

This sequence belongs to the archaeal adenylate kinase family. Homotrimer.

The protein localises to the cytoplasm. The catalysed reaction is AMP + ATP = 2 ADP. This chain is Adenylate kinase (adkA), found in Sulfolobus acidocaldarius (strain ATCC 33909 / DSM 639 / JCM 8929 / NBRC 15157 / NCIMB 11770).